The primary structure comprises 398 residues: Small ribosomal subunit protein mS78 (rPPR3a) (398 aa).

A mitochondrion-targeting transit peptide spans 1 to 19 (MSSLSRVLRGTFNTCPIRR). PPR repeat units follow at residues 108–142 (KEGFAARIISLYGKAGMFENAQKVFEEMPNRDCKR), 143–173 (SVLSFNALLSAYRLSKKFDVVEELFNELPGK), 179–213 (DIVSYNTLIKALCEKDSLPEAVALLDEIENKGLKP), 214–248 (DIVTFNTLLLSSYLKGQFELGEEIWAKMVEKNVAI), 249–283 (DIRTYNARLLGLANEAKSKELVNLFGELKASGLKP), 284–318 (DVFSFNAMIRGSINEGKMDEAEAWYKEIVKHGYRP), and 319–353 (DKATFALLLPAMCKAGDFESAIELFKETFSKRYLV).

This sequence belongs to the PPR family. P subfamily. Component of the mitochondrial ribosome small subunit.

The protein localises to the mitochondrion. The chain is Small ribosomal subunit protein mS78 (rPPR3a) from Arabidopsis thaliana (Mouse-ear cress).